We begin with the raw amino-acid sequence, 286 residues long: Polyamine aminopropyltransferase 1 (286 aa).

In terms of domain architecture, PABS spans 1–235; sequence MSDYQETLYQ…GAMTFAWGST (235 aa). Residue glutamine 30 participates in S-methyl-5'-thioadenosine binding. 2 residues coordinate spermidine: histidine 61 and aspartate 85. Residues glutamate 105 and 137–138 each bind S-methyl-5'-thioadenosine; that span reads DG. Catalysis depends on aspartate 155, which acts as the Proton acceptor. 155-158 serves as a coordination point for spermidine; that stretch reads DSTD. Proline 162 lines the S-methyl-5'-thioadenosine pocket.

It belongs to the spermidine/spermine synthase family. As to quaternary structure, homodimer or homotetramer.

The protein localises to the cytoplasm. The enzyme catalyses S-adenosyl 3-(methylsulfanyl)propylamine + putrescine = S-methyl-5'-thioadenosine + spermidine + H(+). It functions in the pathway amine and polyamine biosynthesis; spermidine biosynthesis; spermidine from putrescine: step 1/1. Catalyzes the irreversible transfer of a propylamine group from the amino donor S-adenosylmethioninamine (decarboxy-AdoMet) to putrescine (1,4-diaminobutane) to yield spermidine. In Pseudomonas aeruginosa (strain ATCC 15692 / DSM 22644 / CIP 104116 / JCM 14847 / LMG 12228 / 1C / PRS 101 / PAO1), this protein is Polyamine aminopropyltransferase 1.